Reading from the N-terminus, the 499-residue chain is Cytosol aminopeptidase (499 aa).

Mn(2+) contacts are provided by Lys267 and Asp272. The active site involves Lys279. Mn(2+) contacts are provided by Asp290, Asp349, and Glu351. The active site involves Arg353.

It belongs to the peptidase M17 family. It depends on Mn(2+) as a cofactor.

It localises to the cytoplasm. The enzyme catalyses Release of an N-terminal amino acid, Xaa-|-Yaa-, in which Xaa is preferably Leu, but may be other amino acids including Pro although not Arg or Lys, and Yaa may be Pro. Amino acid amides and methyl esters are also readily hydrolyzed, but rates on arylamides are exceedingly low.. It carries out the reaction Release of an N-terminal amino acid, preferentially leucine, but not glutamic or aspartic acids.. Its function is as follows. Presumably involved in the processing and regular turnover of intracellular proteins. Catalyzes the removal of unsubstituted N-terminal amino acids from various peptides. This Buchnera aphidicola subsp. Acyrthosiphon pisum (strain APS) (Acyrthosiphon pisum symbiotic bacterium) protein is Cytosol aminopeptidase (pepA).